The following is a 469-amino-acid chain: Citrate synthase, mitochondrial (469 aa).

The transit peptide at 1–30 (MSFLTVSRLAPKLLNSKNATYFLVAARNAS) directs the protein to the mitochondrion. Active-site residues include His304 and His350. Residue Arg359 participates in oxaloacetate binding. Asp405 is a catalytic residue. Residues Arg431 and Arg451 each coordinate oxaloacetate.

The protein belongs to the citrate synthase family. As to quaternary structure, homodimer.

The protein localises to the mitochondrion matrix. The enzyme catalyses oxaloacetate + acetyl-CoA + H2O = citrate + CoA + H(+). It participates in carbohydrate metabolism; tricarboxylic acid cycle; isocitrate from oxaloacetate: step 1/2. Key enzyme of the Krebs tricarboxylic acid cycle which catalyzes the synthesis of citrate from acetyl coenzyme A and oxaloacetate. The protein is Citrate synthase, mitochondrial (cs) of Kajikia audax (Striped marlin).